The chain runs to 257 residues: AN1-type zinc finger protein 2B (257 aa).

2 consecutive AN1-type zinc fingers follow at residues 4–52 (PDLG…QKDI) and 94–142 (KIFT…HPTS). Zn(2+) is bound by residues cysteine 10, cysteine 15, cysteine 25, cysteine 28, cysteine 33, histidine 36, histidine 42, cysteine 44, cysteine 100, cysteine 105, cysteine 115, cysteine 118, cysteine 123, histidine 126, histidine 132, and cysteine 134. Residues 141-151 (TSRAGLAAISR) form a VCP/p97-interacting motif (VIM) region. The disordered stretch occupies residues 153–187 (QAVASTSTVPSPSQTMPSCTSPSRATTRSPSWTAP). Polar residues predominate over residues 155–171 (VASTSTVPSPSQTMPSC). Phosphoserine occurs at positions 163 and 173. A compositionally biased stretch (low complexity) spans 172–186 (TSPSRATTRSPSWTA). 2 UIM domains span residues 197–216 (SEDE…TKPQ) and 221–240 (QEEE…AEYQ). A Cysteine methyl ester modification is found at cysteine 254. Cysteine 254 is lipidated: S-geranylgeranyl cysteine. Positions 254 to 257 (CSLC) match the CAAX motif motif. The propeptide at 255–257 (SLC) is removed in mature form.

In terms of assembly, binds 'Lys-48'-linked polyubiquitin chains of ubiquitinated proteins. Associates with the proteasome complex; upon exposure to arsenite. Interacts (via VIM motif) with VCP; the interaction is direct. Interacts with BAG6. Interacts with IGF1R (nascent precursor form). Interacts with DERL1, FAF2, NPLOC4 and UFD1; probably through VCP. Phosphorylated by MAPK14. Phosphorylation has no effect on association with the proteasome complex.

The protein localises to the endoplasmic reticulum membrane. Its function is as follows. Plays a role in protein homeostasis by regulating both the translocation and the ubiquitin-mediated proteasomal degradation of nascent proteins at the endoplasmic reticulum. It is involved in the regulation of signal-mediated translocation of proteins into the endoplasmic reticulum. It also plays a role in the ubiquitin-mediated proteasomal degradation of proteins for which signal-mediated translocation to the endoplasmic reticulum has failed. May therefore function in the endoplasmic reticulum stress-induced pre-emptive quality control, a mechanism that selectively attenuates the translocation of newly synthesized proteins into the endoplasmic reticulum and reroutes them to the cytosol for proteasomal degradation. By controlling the steady-state expression of the IGF1R receptor, indirectly regulates the insulin-like growth factor receptor signaling pathway. This Homo sapiens (Human) protein is AN1-type zinc finger protein 2B.